Reading from the N-terminus, the 686-residue chain is Cyclic nucleotide-gated channel alpha-1 (686 aa).

Topologically, residues methionine 1–leucine 165 are cytoplasmic. Disordered regions lie at residues glutamate 31–arginine 75 and asparagine 87–lysine 149. The segment covering serine 39–asparagine 53 has biased composition (acidic residues). Over residues serine 110–lysine 124 the composition is skewed to basic and acidic residues. Residues lysine 125 to lysine 134 show a composition bias toward basic residues. Residues lysine 135 to lysine 149 are compositionally biased toward basic and acidic residues. Residues phenylalanine 166 to glutamate 187 form a helical membrane-spanning segment. Residues leucine 188 to leucine 197 lie on the Extracellular side of the membrane. Residues isoleucine 198–glycine 218 form a helical membrane-spanning segment. At tyrosine 219–lysine 243 the chain is on the cytoplasmic side. The chain crosses the membrane as a helical span at residues leucine 244–asparagine 262. Residues tyrosine 263–arginine 267 are Extracellular-facing. The chain crosses the membrane as a helical span at residues leucine 268–threonine 286. The Cytoplasmic portion of the chain corresponds to arginine 287–isoleucine 293. Residues proline 291–methionine 399 form an ion conduction pathway region. Residues phenylalanine 294–isoleucine 317 form a helical membrane-spanning segment. Topologically, residues serine 318–arginine 340 are extracellular. Asparagine 325 carries N-linked (GlcNAc...) asparagine glycosylation. Transmembrane regions (helical) follow at residues leucine 341–valine 375 and valine 376–asparagine 400. Residues threonine 358–glutamate 361 form a selectivity filter region. The segment at alanine 401–alanine 477 is C-linker. At alanine 401–threonine 686 the chain is on the cytoplasmic side. The segment at alanine 481–lysine 601 is cyclic nucleotide-binding domain. 3',5'-cyclic GMP contacts are provided by glycine 541, serine 544, arginine 557, and threonine 558. 2 residues coordinate 3',5'-cyclic AMP: arginine 557 and threonine 558. Residues leucine 619–isoleucine 673 are a coiled coil.

It belongs to the cyclic nucleotide-gated cation channel (TC 1.A.1.5) family. CNGA1 subfamily. In terms of assembly, forms heterotetrameric channels composed of CNGA1 and CNGB1 subunits with 3:1 stoichiometry. May also form cyclic nucleotide-activated homotetrameric channels, that are efficiently activated by saturating cGMP, but poorly activated by saturating cAMP compared to the heterotetramer with CNGB1. The channel binds Ca(2+)-bound CALM1 via CaM1 and CaM2 regions of the CNGB1 subunit; this interaction modulates the affinity of the channel for cNMPs in response to intracellular Ca(2+) levels. Rod cells in the retina.

The protein localises to the cell membrane. It catalyses the reaction Ca(2+)(in) = Ca(2+)(out). The catalysed reaction is Na(+)(in) = Na(+)(out). It carries out the reaction K(+)(in) = K(+)(out). The enzyme catalyses NH4(+)(in) = NH4(+)(out). It catalyses the reaction Rb(+)(in) = Rb(+)(out). The catalysed reaction is Li(+)(in) = Li(+)(out). It carries out the reaction Cs(+)(in) = Cs(+)(out). Its activity is regulated as follows. Channel opening is activated by cGMP and at a much lesser extent by cAMP. Ca(2+) binding concominantly blocks monovalent cation currents. Inhibited by L-cis-diltiazem. In terms of biological role, pore-forming subunit of the rod cyclic nucleotide-gated channel. Mediates rod photoresponses at dim light converting transient changes in intracellular cGMP levels into electrical signals. In the dark, cGMP levels are high and keep the channel open enabling a steady inward current carried by Na(+) and Ca(2+) ions that leads to membrane depolarization and neurotransmitter release from synaptic terminals. Upon photon absorption cGMP levels decline leading to channel closure and membrane hyperpolarization that ultimately slows neurotransmitter release and signals the presence of light, the end point of the phototransduction cascade. Conducts cGMP- and cAMP-gated ion currents, with permeability for monovalent and divalent cations. The selectivity for Ca(2+) over Na(+) increases with cGMP concentrations, whereas the selectivity among monovalent ions is independent of the cGMP levels. The chain is Cyclic nucleotide-gated channel alpha-1 from Homo sapiens (Human).